Reading from the N-terminus, the 365-residue chain is Phosphate acyltransferase (365 aa).

This sequence belongs to the PlsX family. In terms of assembly, homodimer. Probably interacts with PlsY.

Its subcellular location is the cytoplasm. The enzyme catalyses a fatty acyl-[ACP] + phosphate = an acyl phosphate + holo-[ACP]. The protein operates within lipid metabolism; phospholipid metabolism. Functionally, catalyzes the reversible formation of acyl-phosphate (acyl-PO(4)) from acyl-[acyl-carrier-protein] (acyl-ACP). This enzyme utilizes acyl-ACP as fatty acyl donor, but not acyl-CoA. The polypeptide is Phosphate acyltransferase (Jannaschia sp. (strain CCS1)).